The following is a 394-amino-acid chain: Ribulose bisphosphate carboxylase large chain (394 aa).

Lys5 is modified (N6,N6,N6-trimethyllysine). Asn114 and Thr164 together coordinate substrate. Residue Lys166 is the Proton acceptor of the active site. Lys168 serves as a coordination point for substrate. The Mg(2+) site is built by Lys192, Asp194, and Glu195. N6-carboxylysine is present on Lys192. His285 acts as the Proton acceptor in catalysis. The substrate site is built by Arg286, His318, and Ser370.

It belongs to the RuBisCO large chain family. Type I subfamily. Heterohexadecamer of 8 large chains and 8 small chains; disulfide-linked. The disulfide link is formed within the large subunit homodimers. The cofactor is Mg(2+). Post-translationally, the disulfide bond which can form in the large chain dimeric partners within the hexadecamer appears to be associated with oxidative stress and protein turnover.

The protein resides in the plastid. Its subcellular location is the chloroplast. It carries out the reaction 2 (2R)-3-phosphoglycerate + 2 H(+) = D-ribulose 1,5-bisphosphate + CO2 + H2O. The catalysed reaction is D-ribulose 1,5-bisphosphate + O2 = 2-phosphoglycolate + (2R)-3-phosphoglycerate + 2 H(+). RuBisCO catalyzes two reactions: the carboxylation of D-ribulose 1,5-bisphosphate, the primary event in carbon dioxide fixation, as well as the oxidative fragmentation of the pentose substrate in the photorespiration process. Both reactions occur simultaneously and in competition at the same active site. This Alisma plantago-aquatica (Common water-plantain) protein is Ribulose bisphosphate carboxylase large chain (rbcL).